Here is a 1027-residue protein sequence, read N- to C-terminus: uncharacterized protein (1027 aa).

This is an uncharacterized protein from Colorado tick fever virus (strain USA/Florio N-7180) (CTFV).